The sequence spans 359 residues: S-adenosylmethionine:tRNA ribosyltransferase-isomerase (359 aa).

This sequence belongs to the QueA family. Monomer.

Its subcellular location is the cytoplasm. The enzyme catalyses 7-aminomethyl-7-carbaguanosine(34) in tRNA + S-adenosyl-L-methionine = epoxyqueuosine(34) in tRNA + adenine + L-methionine + 2 H(+). It functions in the pathway tRNA modification; tRNA-queuosine biosynthesis. Functionally, transfers and isomerizes the ribose moiety from AdoMet to the 7-aminomethyl group of 7-deazaguanine (preQ1-tRNA) to give epoxyqueuosine (oQ-tRNA). This chain is S-adenosylmethionine:tRNA ribosyltransferase-isomerase, found in Synechococcus sp. (strain ATCC 27144 / PCC 6301 / SAUG 1402/1) (Anacystis nidulans).